Consider the following 582-residue polypeptide: Threonine--tRNA ligase (582 aa).

Positions 185 to 478 (DHRKLGKELE…LTEQYGGAFP (294 aa)) are catalytic. Residues cysteine 278, histidine 329, and histidine 455 each contribute to the Zn(2+) site.

Belongs to the class-II aminoacyl-tRNA synthetase family. In terms of assembly, homodimer. Requires Zn(2+) as cofactor.

It localises to the cytoplasm. The catalysed reaction is tRNA(Thr) + L-threonine + ATP = L-threonyl-tRNA(Thr) + AMP + diphosphate + H(+). Catalyzes the attachment of threonine to tRNA(Thr) in a two-step reaction: L-threonine is first activated by ATP to form Thr-AMP and then transferred to the acceptor end of tRNA(Thr). Also edits incorrectly charged L-seryl-tRNA(Thr). The sequence is that of Threonine--tRNA ligase from Dehalococcoides mccartyi (strain ATCC BAA-2100 / JCM 16839 / KCTC 5957 / BAV1).